Reading from the N-terminus, the 452-residue chain is Transcription factor ETV6 (452 aa).

Polar residues predominate over residues methionine 1–isoleucine 10. Residues methionine 1 to serine 30 are disordered. Lysine 11 carries the post-translational modification N6-acetyllysine; alternate. Lysine 11 is covalently cross-linked (Glycyl lysine isopeptide (Lys-Gly) (interchain with G-Cter in SUMO2); alternate). Position 18 is a phosphothreonine (threonine 18). Residue serine 22 is modified to Phosphoserine. The region spanning alanine 40 to arginine 124 is the PNT domain. The segment at valine 158–serine 262 is disordered. Serine 213 and serine 238 each carry phosphoserine. Residues glutamine 230 to glutamate 250 show a composition bias toward polar residues. Serine 257 is subject to Phosphoserine; by MAPK14. A Glycyl lysine isopeptide (Lys-Gly) (interchain with G-Cter in SUMO2) cross-link involves residue lysine 288. Residue lysine 302 is modified to N6-acetyllysine; alternate. A Glycyl lysine isopeptide (Lys-Gly) (interchain with G-Cter in SUMO2); alternate cross-link involves residue lysine 302. Serine 323 carries the post-translational modification Phosphoserine. A DNA-binding region (ETS) is located at residues arginine 339 to methionine 420. Residues lysine 403 and lysine 421 each participate in a glycyl lysine isopeptide (Lys-Gly) (interchain with G-Cter in SUMO2) cross-link.

The protein belongs to the ETS family. In terms of assembly, can form homodimers or heterodimers with TEL2 or FLI1. Interacts with L3MBTL1 and HDAC9. In terms of processing, phosphorylation of Ser-257 by MAPK14 (p38) inhibits ETV6 transcriptional repression. In terms of tissue distribution, ubiquitous.

It is found in the nucleus. Transcriptional repressor; binds to the DNA sequence 5'-CCGGAAGT-3'. Plays a role in hematopoiesis and malignant transformation. In Homo sapiens (Human), this protein is Transcription factor ETV6 (ETV6).